We begin with the raw amino-acid sequence, 97 residues long: Conotoxin Cal6.1a (97 aa).

The signal sequence occupies residues 1 to 22 (MKLTTVLVVALLVLAACQFTVT). The tract at residues 23–46 (DNSGDDPENPSLRSVGENQNPDST) is disordered. Positions 23–68 (DNSGDDPENPSLRSVGENQNPDSTKTITAWATRDMTNMRRGLNRPS) are excised as a propeptide. 3 disulfide bridges follow: Cys-71–Cys-87, Cys-78–Cys-91, and Cys-86–Cys-96.

The protein belongs to the conotoxin O1 superfamily. As to expression, expressed by the venom duct.

It localises to the secreted. Its function is as follows. Probable neurotoxin with unknown target. Possibly targets ion channels. This is Conotoxin Cal6.1a from Californiconus californicus (California cone).